Consider the following 391-residue polypeptide: uncharacterized protein (391 aa).

Positions 235–330 (VFILSRINLL…LYLKNETQKS (96 aa)) constitute an HTH arsR-type domain.

This is an uncharacterized protein from Methanocaldococcus jannaschii (strain ATCC 43067 / DSM 2661 / JAL-1 / JCM 10045 / NBRC 100440) (Methanococcus jannaschii).